Consider the following 392-residue polypeptide: Bifunctional enzyme Fae/Hps (392 aa).

The formaldehyde-activating enzyme stretch occupies residues 1-161; the sequence is MFQIGEALMG…EESNKSTHAI (161 aa). Histidine 17 functions as the Proton donor in the catalytic mechanism. Residues aspartate 19, leucine 48, lysine 66, threonine 68, and glutamine 83 each coordinate substrate. Residues 162–392 form a 3-hexulose-6-phosphate synthase region; that stretch reads MGFKVTRLWD…IDQFRVMTDF (231 aa).

This sequence in the N-terminal section; belongs to the formaldehyde-activating enzyme family. In the C-terminal section; belongs to the HPS/KGPDC family. HPS subfamily.

It carries out the reaction 5,6,7,8-tetrahydromethanopterin + formaldehyde = 5,10-methylenetetrahydromethanopterin + H2O. It catalyses the reaction D-ribulose 5-phosphate + formaldehyde = D-arabino-hex-3-ulose 6-phosphate. It functions in the pathway carbohydrate biosynthesis; D-ribose 5-phosphate biosynthesis. In terms of biological role, catalyzes the condensation of formaldehyde with tetrahydromethanopterin (H(4)MPT) to 5,10-methylenetetrahydromethanopterin. Functionally, catalyzes the reversible formation of ribulose-5-phosphate and formaldehyde from 3-hexulose-6-phosphate. This is Bifunctional enzyme Fae/Hps from Methanosarcina mazei (strain ATCC BAA-159 / DSM 3647 / Goe1 / Go1 / JCM 11833 / OCM 88) (Methanosarcina frisia).